The primary structure comprises 396 residues: NADH-quinone oxidoreductase subunit D (396 aa).

Belongs to the complex I 49 kDa subunit family. In terms of assembly, NDH-1 is composed of 14 different subunits. Subunits NuoB, C, D, E, F, and G constitute the peripheral sector of the complex.

Its subcellular location is the cell inner membrane. It carries out the reaction a quinone + NADH + 5 H(+)(in) = a quinol + NAD(+) + 4 H(+)(out). Functionally, NDH-1 shuttles electrons from NADH, via FMN and iron-sulfur (Fe-S) centers, to quinones in the respiratory chain. The immediate electron acceptor for the enzyme in this species is believed to be ubiquinone. Couples the redox reaction to proton translocation (for every two electrons transferred, four hydrogen ions are translocated across the cytoplasmic membrane), and thus conserves the redox energy in a proton gradient. This Brucella anthropi (strain ATCC 49188 / DSM 6882 / CCUG 24695 / JCM 21032 / LMG 3331 / NBRC 15819 / NCTC 12168 / Alc 37) (Ochrobactrum anthropi) protein is NADH-quinone oxidoreductase subunit D.